Reading from the N-terminus, the 291-residue chain is Shikimate dehydrogenase (NADP(+)) (291 aa).

Shikimate is bound by residues 18-20 (SLS) and T70. Residue K74 is the Proton acceptor of the active site. The shikimate site is built by N95 and D110. NADP(+) is bound by residues 134 to 138 (GAGGA) and V228. Y230 is a binding site for shikimate. An NADP(+)-binding site is contributed by G251.

Belongs to the shikimate dehydrogenase family. Homodimer.

The catalysed reaction is shikimate + NADP(+) = 3-dehydroshikimate + NADPH + H(+). It participates in metabolic intermediate biosynthesis; chorismate biosynthesis; chorismate from D-erythrose 4-phosphate and phosphoenolpyruvate: step 4/7. In terms of biological role, involved in the biosynthesis of the chorismate, which leads to the biosynthesis of aromatic amino acids. Catalyzes the reversible NADPH linked reduction of 3-dehydroshikimate (DHSA) to yield shikimate (SA). This Streptomyces avermitilis (strain ATCC 31267 / DSM 46492 / JCM 5070 / NBRC 14893 / NCIMB 12804 / NRRL 8165 / MA-4680) protein is Shikimate dehydrogenase (NADP(+)).